Reading from the N-terminus, the 396-residue chain is uncharacterized protein (396 aa).

11 helical membrane passes run 7-27 (SDDV…SIGL), 36-56 (AVSG…VGVL), 62-82 (VYDT…LFQI), 94-114 (LLFI…LAFF), 159-179 (VVAD…IPAL), 218-238 (IAFN…VSGY), 250-270 (GTLG…IFLF), 285-305 (TFLI…RLIV), 310-330 (LILL…LAAG), 340-360 (ILLA…MAIA), and 367-387 (VAPI…VGTF).

The protein localises to the cell membrane. This is an uncharacterized protein from Bacillus subtilis (strain 168).